Consider the following 423-residue polypeptide: Levansucrase (423 aa).

The sucrose site is built by Trp-47, Asp-48, Ser-119, Arg-193, and Asp-194. Asp-48 (nucleophile) is an active-site residue. Glu-278 serves as the catalytic Proton donor/acceptor.

The protein belongs to the glycosyl hydrolase 68 family.

The protein localises to the secreted. The enzyme catalyses [6)-beta-D-fructofuranosyl-(2-&gt;](n) alpha-D-glucopyranoside + sucrose = [6)-beta-D-fructofuranosyl-(2-&gt;](n+1) alpha-D-glucopyranoside + D-glucose. Catalyzes the synthesis of levan, a fructose polymer, by transferring the fructosyl moiety from sucrose to a growing acceptor molecule. In Zymomonas mobilis subsp. mobilis (strain ATCC 10988 / DSM 424 / LMG 404 / NCIMB 8938 / NRRL B-806 / ZM1), this protein is Levansucrase.